Consider the following 89-residue polypeptide: Small ribosomal subunit protein bS20 (89 aa).

Positions 1–20 are disordered; that stretch reads MANHKSAEKRARQTIKRTER.

It belongs to the bacterial ribosomal protein bS20 family.

Binds directly to 16S ribosomal RNA. The sequence is that of Small ribosomal subunit protein bS20 from Campylobacter curvus (strain 525.92).